Reading from the N-terminus, the 251-residue chain is 3-isopropylmalate dehydratase small subunit 1 (251 aa).

A chloroplast-targeting transit peptide spans 1–59 (MAASLQSANPTLSRTLASPNKPSSFATFRSPFLRFNSTSVASNFKPLVSREASSSFVTR).

Belongs to the LeuD family. As to quaternary structure, heterodimer of the large LEUC/IIL1 subunit and the small LEUD (SSU1, SSU2 or SSU3) subunits. As to expression, expressed at low levels in roots, root tips, at the basis of the hypocotyls, and in emerging leaves. In young seedlings, expressed in cotyledon epidermal cells. In hypocotyls, expressed in peripheral cells. In seedling roots, expressed in the epidermis, including root hairs, and throughout the cortex. In rosette leaves, expressed in the upper and lower epidermis. In roots of adult plants, expressed in the root tips and cortex of the mature root enclosing the stele. In flowering stalks, expressed in the epidermis. Expressed in the carpel epidermis.

The protein localises to the plastid. It is found in the chloroplast stroma. It catalyses the reaction (2R,3S)-3-isopropylmalate = (2S)-2-isopropylmalate. It functions in the pathway amino-acid biosynthesis; L-leucine biosynthesis; L-leucine from 3-methyl-2-oxobutanoate: step 2/4. Functionally, catalyzes the isomerization between 2-isopropylmalate and 3-isopropylmalate, via the formation of 2-isopropylmaleate. Plays an essential role in leucine biosynthesis. Functions in both the biosynthesis of leucine, and in the methionine chain elongation pathway of aliphatic glucosinolate formation. Plays an essential role in female gametophyte development. This chain is 3-isopropylmalate dehydratase small subunit 1, found in Arabidopsis thaliana (Mouse-ear cress).